The sequence spans 274 residues: ATP synthase subunit delta (274 aa).

Belongs to the ATPase delta chain family. F-type ATPases have 2 components, F(1) - the catalytic core - and F(0) - the membrane proton channel. F(1) has five subunits: alpha(3), beta(3), gamma(1), delta(1), epsilon(1). F(0) has three main subunits: a(1), b(2) and c(10-14). The alpha and beta chains form an alternating ring which encloses part of the gamma chain. F(1) is attached to F(0) by a central stalk formed by the gamma and epsilon chains, while a peripheral stalk is formed by the delta and b chains.

The protein localises to the cell membrane. In terms of biological role, f(1)F(0) ATP synthase produces ATP from ADP in the presence of a proton or sodium gradient. F-type ATPases consist of two structural domains, F(1) containing the extramembraneous catalytic core and F(0) containing the membrane proton channel, linked together by a central stalk and a peripheral stalk. During catalysis, ATP synthesis in the catalytic domain of F(1) is coupled via a rotary mechanism of the central stalk subunits to proton translocation. This protein is part of the stalk that links CF(0) to CF(1). It either transmits conformational changes from CF(0) to CF(1) or is implicated in proton conduction. The chain is ATP synthase subunit delta from Acidothermus cellulolyticus (strain ATCC 43068 / DSM 8971 / 11B).